The sequence spans 146 residues: Interleukin-13 (146 aa).

The first 24 residues, 1-24 (MHPLLNPLLLALGLMALLLTTVIA), serve as a signal peptide directing secretion. Residues asparagine 52, asparagine 63, asparagine 71, and asparagine 86 are each glycosylated (N-linked (GlcNAc...) asparagine). Disulfide bonds link cysteine 62/cysteine 90 and cysteine 78/cysteine 104.

It belongs to the IL-4/IL-13 family. In terms of assembly, interacts with IL13RA2.

The protein resides in the secreted. Functionally, cytokine that plays important roles in allergic inflammation and immune response to parasite infection. Synergizes with IL2 in regulating interferon-gamma synthesis. Stimulates B-cell proliferation, and activation of eosinophils, basophils, and mast cells. Plays an important role in controlling IL33 activity by modulating the production of transmembrane and soluble forms of interleukin-1 receptor-like 1/IL1RL1. Displays the capacity to antagonize Th1-driven proinflammatory immune response and downregulates synthesis of many proinflammatory cytokines including IL1, IL6, IL10, IL12 and TNF-alpha through a mechanism that partially involves suppression of NF-kappa-B. Also functions on nonhematopoietic cells, including endothelial cells where it induces vascular cell adhesion protein 1/VCAM1, which is important in the recruitment of eosinophils. Exerts its biological effects through its receptors which comprises the IL4R chain and the IL13RA1 chain, to activate JAK1 and TYK2, leading to the activation of STAT6. Aside from IL13RA1, another receptor IL13RA2 acts as a high affinity decoy for IL13 and mediates internalization and depletion of extracellular IL13. The sequence is that of Interleukin-13 (IL13) from Homo sapiens (Human).